Consider the following 403-residue polypeptide: D-galactonate dehydratase family member ManD (403 aa).

Residues Asn-37 and His-122 each contribute to the substrate site. Tyr-159 (proton donor/acceptor) is an active-site residue. Residue Asp-211 coordinates Mg(2+). The active-site Proton donor/acceptor is the His-213. Mg(2+)-binding residues include Glu-237 and Glu-263. Substrate-binding residues include Glu-263, Arg-284, His-313, Asp-317, and Glu-340.

This sequence belongs to the mandelate racemase/muconate lactonizing enzyme family. GalD subfamily. Mg(2+) is required as a cofactor.

It catalyses the reaction D-mannonate = 2-dehydro-3-deoxy-D-gluconate + H2O. It carries out the reaction D-gluconate = 2-dehydro-3-deoxy-D-gluconate + H2O. In terms of biological role, has low dehydratase activity with D-mannonate and D-gluconate, suggesting that these are not physiological substrates and that it has no significant role in the in vivo degradation of these compounds. Has no detectable activity with a panel of 70 other acid sugars (in vitro). In Chromohalobacter salexigens (strain ATCC BAA-138 / DSM 3043 / CIP 106854 / NCIMB 13768 / 1H11), this protein is D-galactonate dehydratase family member ManD (manD).